The chain runs to 244 residues: 3-deoxy-manno-octulosonate cytidylyltransferase (244 aa).

It belongs to the KdsB family.

The protein localises to the cytoplasm. It carries out the reaction 3-deoxy-alpha-D-manno-oct-2-ulosonate + CTP = CMP-3-deoxy-beta-D-manno-octulosonate + diphosphate. It functions in the pathway nucleotide-sugar biosynthesis; CMP-3-deoxy-D-manno-octulosonate biosynthesis; CMP-3-deoxy-D-manno-octulosonate from 3-deoxy-D-manno-octulosonate and CTP: step 1/1. The protein operates within bacterial outer membrane biogenesis; lipopolysaccharide biosynthesis. Activates KDO (a required 8-carbon sugar) for incorporation into bacterial lipopolysaccharide in Gram-negative bacteria. This Rickettsia bellii (strain OSU 85-389) protein is 3-deoxy-manno-octulosonate cytidylyltransferase.